Reading from the N-terminus, the 319-residue chain is Cytochrome f (319 aa).

Positions 1–35 (MQNRNISYWIKKCVIQSISIVILMKIIAWPSISEA) are cleaved as a signal peptide. Heme contacts are provided by Tyr36, Cys56, Cys59, and His60. The helical transmembrane segment at 285–305 (VQSLLVFFVSVTLAQIFLVLK) threads the bilayer.

It belongs to the cytochrome f family. As to quaternary structure, the 4 large subunits of the cytochrome b6-f complex are cytochrome b6, subunit IV (17 kDa polypeptide, petD), cytochrome f and the Rieske protein, while the 4 small subunits are PetG, PetL, PetM and PetN. The complex functions as a dimer. Heme serves as cofactor.

It is found in the plastid. The protein resides in the chloroplast thylakoid membrane. Its function is as follows. Component of the cytochrome b6-f complex, which mediates electron transfer between photosystem II (PSII) and photosystem I (PSI), cyclic electron flow around PSI, and state transitions. The sequence is that of Cytochrome f from Physcomitrium patens (Spreading-leaved earth moss).